Consider the following 145-residue polypeptide: Large ribosomal subunit protein uL15 (145 aa).

Residues 1–11 (MELHSLKSTPG) are compositionally biased toward polar residues. Residues 1-48 (MELHSLKSTPGSRKEKHRKGRGHAAGKGKQAGKGQSGQRKRSKVRLGF) form a disordered region. The span at 14-26 (KEKHRKGRGHAAG) shows a compositional bias: basic residues.

It belongs to the universal ribosomal protein uL15 family. In terms of assembly, part of the 50S ribosomal subunit.

Functionally, binds to the 23S rRNA. The sequence is that of Large ribosomal subunit protein uL15 from Mycoplasmopsis pulmonis (strain UAB CTIP) (Mycoplasma pulmonis).